The primary structure comprises 416 residues: Probable glucan 1,3-beta-glucosidase A (416 aa).

The signal sequence occupies residues 1–22 (MFVESAKKALLALSLLAASAQA). A glycan (N-linked (GlcNAc...) asparagine) is linked at Asn183. The Proton donor role is filled by Glu210. Cystine bridges form between Cys290–Cys415 and Cys316–Cys342. Glu308 serves as the catalytic Nucleophile.

The protein belongs to the glycosyl hydrolase 5 (cellulase A) family. In terms of assembly, monomer. Requires Mn(2+) as cofactor.

Its subcellular location is the secreted. The enzyme catalyses Successive hydrolysis of beta-D-glucose units from the non-reducing ends of (1-&gt;3)-beta-D-glucans, releasing alpha-glucose.. Its function is as follows. Beta-glucanases participate in the metabolism of beta-glucan, the main structural component of the cell wall. It could also function biosynthetically as a transglycosylase. The chain is Probable glucan 1,3-beta-glucosidase A (exgA) from Aspergillus niger (strain ATCC MYA-4892 / CBS 513.88 / FGSC A1513).